The primary structure comprises 670 residues: DNA ligase (670 aa).

NAD(+)-binding positions include 33-37 (DVEYD), 82-83 (SL), and Glu-114. Residue Lys-116 is the N6-AMP-lysine intermediate of the active site. Positions 137, 174, 291, and 315 each coordinate NAD(+). 4 residues coordinate Zn(2+): Cys-409, Cys-412, Cys-427, and Cys-433. One can recognise a BRCT domain in the interval 593-670 (DQELPLEGKV…TEEDLIALIS (78 aa)).

It belongs to the NAD-dependent DNA ligase family. LigA subfamily. Mg(2+) is required as a cofactor. Requires Mn(2+) as cofactor.

It carries out the reaction NAD(+) + (deoxyribonucleotide)n-3'-hydroxyl + 5'-phospho-(deoxyribonucleotide)m = (deoxyribonucleotide)n+m + AMP + beta-nicotinamide D-nucleotide.. Functionally, DNA ligase that catalyzes the formation of phosphodiester linkages between 5'-phosphoryl and 3'-hydroxyl groups in double-stranded DNA using NAD as a coenzyme and as the energy source for the reaction. It is essential for DNA replication and repair of damaged DNA. The chain is DNA ligase from Vibrio atlanticus (strain LGP32) (Vibrio splendidus (strain Mel32)).